The following is a 218-amino-acid chain: MVERQIAARGVHDPRVLAAMRKVPREAFLPEPMRDLAYEDAPVPIAAEQTMSQPYIVALMVEALLLQGSDNVLEIGAGSGYAAAVLGEIAGHVTTVERIATLADAAAAKLAELGYGDVDVHRSDGTRGWPAAAPYDAIVVAAGGPQVPESLKAQLKIGGRLVMPVGADQQAQELVRLTRLGEADFKREHLGDVRFVPLLGAEGWQQPEPAGRTAREKG.

Residue Ser52 is part of the active site.

The protein belongs to the methyltransferase superfamily. L-isoaspartyl/D-aspartyl protein methyltransferase family.

Its subcellular location is the cytoplasm. The catalysed reaction is [protein]-L-isoaspartate + S-adenosyl-L-methionine = [protein]-L-isoaspartate alpha-methyl ester + S-adenosyl-L-homocysteine. Its function is as follows. Catalyzes the methyl esterification of L-isoaspartyl residues in peptides and proteins that result from spontaneous decomposition of normal L-aspartyl and L-asparaginyl residues. It plays a role in the repair and/or degradation of damaged proteins. In Rhodopseudomonas palustris (strain ATCC BAA-98 / CGA009), this protein is Protein-L-isoaspartate O-methyltransferase.